Reading from the N-terminus, the 89-residue chain is Small ribosomal subunit protein uS15 (89 aa).

The protein belongs to the universal ribosomal protein uS15 family. As to quaternary structure, part of the 30S ribosomal subunit. Forms a bridge to the 50S subunit in the 70S ribosome, contacting the 23S rRNA.

Its function is as follows. One of the primary rRNA binding proteins, it binds directly to 16S rRNA where it helps nucleate assembly of the platform of the 30S subunit by binding and bridging several RNA helices of the 16S rRNA. Functionally, forms an intersubunit bridge (bridge B4) with the 23S rRNA of the 50S subunit in the ribosome. This is Small ribosomal subunit protein uS15 from Ectopseudomonas mendocina (strain ymp) (Pseudomonas mendocina).